The primary structure comprises 183 residues: MKQLLEFIPLILFFAVYKLVGVQAAAITLVLATILQLILVRILFKKLETSQWIVGLSVIIFGILTAYFDDLAFLKWKVTIINGLFAAVLLISQYVFHKPVVKMLLAKELSLPTQVWNRLNLGWAIFFIICMLINIIISQLFSDDTWATFKTFGFTGLSLVAVIITGIYLYPYIKKLENNNEQK.

5 helical membrane-spanning segments follow: residues 22–44 (VQAA…RILF), 53–73 (IVGL…DLAF), 76–96 (WKVT…QYVF), 121–141 (LGWA…SQLF), and 153–173 (GFTG…YPYI).

This sequence belongs to the YciB family.

The protein localises to the cell inner membrane. Plays a role in cell envelope biogenesis, maintenance of cell envelope integrity and membrane homeostasis. In Haemophilus ducreyi (strain 35000HP / ATCC 700724), this protein is Inner membrane-spanning protein YciB.